An 835-amino-acid polypeptide reads, in one-letter code: MSDTDGKKTLGLRGSRPGNVKQSFSHGRTKNVVVETKRKRVVVPKPGAGKPSAGGSSPAGDPSRRPAGISDAEMERRLNALKAAKARESEEAAQREAEEKARAEERERRRAEQEAKEREQREAEQRAREKAEEEERQRREAEEEAKRAAVRAAAEQEAPKAERSAERAPAAARPEGGDNARRTTDRDREREQRQTRGKGRQDGRRSGKLTLSQVTDGEGGRQKSLAAMKRKQERARQKAMGGAAEREKVIREVQLPEAIVVSELANRMAERVADVVKELMKMGMMVTQNQTIDADTAELIIEEFGHKVVRVSDSDVEDVISDIEDAEEDLKPRPPVITIMGHVDHGKTSLLDAIRDAKVVAGEAGGITQHIGAYQVKTDGGATLSFLDTPGHAAFTSMRSRGAQVTDIVVLVVAADDAVMPQTVEAINHAKAAGVPMIVAINKIDKPEANPTKVRTDLLQHEVVVEAMSGEVQDVEVSAKTGEGLDELLEAIALQAEILELKANPDRPAQGAVIEAQLDVGRGPVATVLIQKGTLRQGDIFVVGEQYGKVRALINDKGERVSEAGPSVPVEVLGLNGTPEAGDVLNVTSTEAQAREIAEYRAQVAKDKRAAAGAATTLEQLMAKAKADENVAELPILVKADVQGSAEAIVQAMEKIGNDEVRVRVLHSGVGAITETDVGLAEASGAPIMGFNVRANASARNTANQKGVEIRYYSVIYDLVDDVKAAASGLLSAEIRENFIGYANIKEVFKVSNVGKVAGCLVTEGVARRSAGVRLLRDNVVIHEGTLKTLKRFKDEVAEVQSGQECGMAFENYDDIRPGDVIEIFEREEVTRTLT.

The disordered stretch occupies residues 1–243 (MSDTDGKKTL…RARQKAMGGA (243 aa)). Low complexity predominate over residues 43–67 (VPKPGAGKPSAGGSSPAGDPSRRPA). Basic and acidic residues-rich tracts occupy residues 85–147 (KARE…EAKR), 157–166 (EAPKAERSAE), and 175–205 (EGGDNARRTTDRDREREQRQTRGKGRQDGRR). Residues 332–500 (PRPPVITIMG…AIALQAEILE (169 aa)) form the tr-type G domain. A G1 region spans residues 341–348 (GHVDHGKT). 341-348 (GHVDHGKT) provides a ligand contact to GTP. The G2 stretch occupies residues 366–370 (GITQH). The interval 388–391 (DTPG) is G3. GTP is bound by residues 388-392 (DTPGH) and 442-445 (NKID). The interval 442 to 445 (NKID) is G4. The interval 478-480 (SAK) is G5.

Belongs to the TRAFAC class translation factor GTPase superfamily. Classic translation factor GTPase family. IF-2 subfamily.

Its subcellular location is the cytoplasm. One of the essential components for the initiation of protein synthesis. Protects formylmethionyl-tRNA from spontaneous hydrolysis and promotes its binding to the 30S ribosomal subunits. Also involved in the hydrolysis of GTP during the formation of the 70S ribosomal complex. In Ruegeria pomeroyi (strain ATCC 700808 / DSM 15171 / DSS-3) (Silicibacter pomeroyi), this protein is Translation initiation factor IF-2.